We begin with the raw amino-acid sequence, 493 residues long: Glycosyltransferase alg8 (493 aa).

4 helical membrane passes run 13–32 (GWLF…PTSI), 47–69 (VGIW…LYIV), 380–402 (LTVA…LLWI), and 422–444 (PAYP…YVFF).

This sequence belongs to the glycosyltransferase 2 family.

The protein resides in the cell membrane. It participates in glycan biosynthesis; alginate biosynthesis. Possibly a processive enzyme that polymerizes GDP-mannuronic acid. The chain is Glycosyltransferase alg8 (alg8) from Pseudomonas syringae pv. tomato (strain ATCC BAA-871 / DC3000).